The chain runs to 347 residues: NADH-ubiquinone oxidoreductase chain 2 (347 aa).

10 consecutive transmembrane segments (helical) span residues 13-33 (IILGTSIVITSSHWLTVWIGF), 59-79 (YFLIQATASMLLMLAVTINLL), 84-104 (WAVSNMIDPLALTIMTLALAM), 111-131 (FHFWVPEVTQGVPLLSGLILL), 149-169 (IDPTLILTMSILSVLVGGWGG), 178-198 (IMAYSSISHMGWMTAILIYNP), 201-221 (TILNLLLYIMMTSTTFILLII), 240-260 (IAIIILTTMLSLGGLPPLTGF), 276-296 (IALSLFMAMAALLNLYFYTRL), and 326-346 (LSPLIIISTMILPLTPTMSAL).

The protein belongs to the complex I subunit 2 family. Core subunit of respiratory chain NADH dehydrogenase (Complex I) which is composed of 45 different subunits. Interacts with TMEM242.

The protein localises to the mitochondrion inner membrane. The catalysed reaction is a ubiquinone + NADH + 5 H(+)(in) = a ubiquinol + NAD(+) + 4 H(+)(out). Functionally, core subunit of the mitochondrial membrane respiratory chain NADH dehydrogenase (Complex I) that is believed to belong to the minimal assembly required for catalysis. Complex I functions in the transfer of electrons from NADH to the respiratory chain. The immediate electron acceptor for the enzyme is believed to be ubiquinone. This is NADH-ubiquinone oxidoreductase chain 2 from Chrotopterus auritus (Peters's woolly false vampire bat).